The sequence spans 244 residues: PHD finger protein ALFIN-LIKE 2 (244 aa).

The segment covering 137-148 has biased composition (basic and acidic residues); the sequence is LSDRKHGRDNKS. The tract at residues 137 to 178 is disordered; the sequence is LSDRKHGRDNKSGADNGSKSRHSGKRANDVQTKTSRPAVVDD. The PHD-type zinc finger occupies 187 to 239; sequence ETLCGTCGGRYNANEFWIGCDICERWFHGKCVRITPAKAEHIKHYKCPDCSSS.

The protein belongs to the Alfin family. As to quaternary structure, interacts with H3K4me3 and to a lesser extent with H3K4me2.

It localises to the nucleus. In terms of biological role, histone-binding component that specifically recognizes H3 tails trimethylated on 'Lys-4' (H3K4me3), which mark transcription start sites of virtually all active genes. The polypeptide is PHD finger protein ALFIN-LIKE 2 (Oryza sativa subsp. indica (Rice)).